A 234-amino-acid chain; its full sequence is Uridylate kinase (234 aa).

9–10 (GS) lines the ATP pocket. Glycine 43 contacts UMP. Residues glycine 44 and arginine 48 each coordinate ATP. UMP contacts are provided by residues aspartate 65 and 113–119 (VIPGQTT). 3 residues coordinate ATP: threonine 139, tyrosine 145, and aspartate 148.

This sequence belongs to the UMP kinase family. As to quaternary structure, homohexamer.

The protein localises to the cytoplasm. It carries out the reaction UMP + ATP = UDP + ADP. It functions in the pathway pyrimidine metabolism; CTP biosynthesis via de novo pathway; UDP from UMP (UMPK route): step 1/1. Inhibited by UTP. Functionally, catalyzes the reversible phosphorylation of UMP to UDP. In Methanococcoides burtonii (strain DSM 6242 / NBRC 107633 / OCM 468 / ACE-M), this protein is Uridylate kinase.